We begin with the raw amino-acid sequence, 646 residues long: Peptidylprolyl isomerase domain and WD repeat-containing protein 1 (646 aa).

A disordered region spans residues 1-30 (MAAESGSDFQQRRRRRRDPEEPEKTELSER). An N-acetylalanine modification is found at Ala-2. Residues 17–30 (RDPEEPEKTELSER) are compositionally biased toward basic and acidic residues. WD repeat units follow at residues 88 to 126 (MHRD…IEFV), 131 to 170 (SHLG…MINM), 221 to 260 (LHTS…YKFP), and 278 to 319 (KCKA…RVFD). Basic and acidic residues predominate over residues 455–478 (EPEDTKSADSDRDVFNEKPSKEEV). The interval 455-490 (EPEDTKSADSDRDVFNEKPSKEEVMAATQAEGPKRV) is disordered. Residues 490–645 (VSDSAIIHTS…EDVSIINITV (156 aa)) enclose the PPIase cyclophilin-type domain.

Belongs to the cyclophilin-type PPIase family. PPIL1 subfamily. In terms of assembly, identified in the spliceosome C complex.

Its subcellular location is the nucleus. It carries out the reaction [protein]-peptidylproline (omega=180) = [protein]-peptidylproline (omega=0). Its activity is regulated as follows. Inhibited by cyclosporin A (CsA). Functionally, PPIase that catalyzes the cis-trans isomerization of proline imidic peptide bonds in oligopeptides and may therefore assist protein folding. May be involved in pre-mRNA splicing. This chain is Peptidylprolyl isomerase domain and WD repeat-containing protein 1, found in Pongo abelii (Sumatran orangutan).